Here is a 180-residue protein sequence, read N- to C-terminus: uncharacterized protein (180 aa).

This is an uncharacterized protein from Magallana gigas (Pacific oyster).